The primary structure comprises 632 residues: tRNA uridine 5-carboxymethylaminomethyl modification enzyme MnmG (632 aa).

15–20 (GAGHAG) provides a ligand contact to FAD. The interval 205–231 (PRVDGNTIDYSKTQEEPGDKEPRHFSY) is disordered. Positions 216-228 (KTQEEPGDKEPRH) are enriched in basic and acidic residues. An NAD(+)-binding site is contributed by 276–290 (GPRYCPSIEDKVVRF).

This sequence belongs to the MnmG family. In terms of assembly, homodimer. Heterotetramer of two MnmE and two MnmG subunits. Requires FAD as cofactor.

It is found in the cytoplasm. NAD-binding protein involved in the addition of a carboxymethylaminomethyl (cmnm) group at the wobble position (U34) of certain tRNAs, forming tRNA-cmnm(5)s(2)U34. The chain is tRNA uridine 5-carboxymethylaminomethyl modification enzyme MnmG from Lactobacillus johnsonii (strain CNCM I-12250 / La1 / NCC 533).